Consider the following 104-residue polypeptide: Thioredoxin (104 aa).

The Thioredoxin domain occupies 2–104; that stretch reads AIVKVTDSNF…NLAEVLDKHL (103 aa). Cys29 and Cys32 are joined by a disulfide.

The protein belongs to the thioredoxin family.

Component of the thioredoxin-thioredoxin reductase system. Participates in various redox reactions through the reversible oxidation of its active center dithiol to a disulfide and catalyzes dithiol-disulfide exchange reactions. This Staphylococcus haemolyticus (strain JCSC1435) protein is Thioredoxin (trxA).